Reading from the N-terminus, the 208-residue chain is Protein-L-isoaspartate O-methyltransferase (208 aa).

Residue S59 is part of the active site.

The protein belongs to the methyltransferase superfamily. L-isoaspartyl/D-aspartyl protein methyltransferase family.

The protein localises to the cytoplasm. The enzyme catalyses [protein]-L-isoaspartate + S-adenosyl-L-methionine = [protein]-L-isoaspartate alpha-methyl ester + S-adenosyl-L-homocysteine. Functionally, catalyzes the methyl esterification of L-isoaspartyl residues in peptides and proteins that result from spontaneous decomposition of normal L-aspartyl and L-asparaginyl residues. It plays a role in the repair and/or degradation of damaged proteins. The chain is Protein-L-isoaspartate O-methyltransferase from Vibrio vulnificus (strain CMCP6).